The sequence spans 182 residues: Ribosome-recycling factor (182 aa).

This sequence belongs to the RRF family.

The protein localises to the cytoplasm. In terms of biological role, responsible for the release of ribosomes from messenger RNA at the termination of protein biosynthesis. May increase the efficiency of translation by recycling ribosomes from one round of translation to another. The sequence is that of Ribosome-recycling factor from Cyanothece sp. (strain PCC 7425 / ATCC 29141).